Reading from the N-terminus, the 200-residue chain is Large ribosomal subunit protein uL4 (200 aa).

The segment at 38–75 is disordered; sequence GRQGSKQQKNRSDVSGGGKRPWRQKGTGRARAGTSRGP.

This sequence belongs to the universal ribosomal protein uL4 family. In terms of assembly, part of the 50S ribosomal subunit.

One of the primary rRNA binding proteins, this protein initially binds near the 5'-end of the 23S rRNA. It is important during the early stages of 50S assembly. It makes multiple contacts with different domains of the 23S rRNA in the assembled 50S subunit and ribosome. Functionally, forms part of the polypeptide exit tunnel. This Azotobacter vinelandii (strain DJ / ATCC BAA-1303) protein is Large ribosomal subunit protein uL4.